A 310-amino-acid chain; its full sequence is Succinate dehydrogenase assembly factor 2, mitochondrial (310 aa).

Over residues 35–48 the composition is skewed to basic and acidic residues; sequence LKDGSDEASPEVKA. The interval 35–67 is disordered; sequence LKDGSDEASPEVKAHRANQANKAPNQFVPNTTS. The span at 52 to 67 shows a compositional bias: polar residues; sequence NQANKAPNQFVPNTTS.

It belongs to the SDHAF2 family. As to quaternary structure, interacts with the flavoprotein subunit within the SDH catalytic dimer.

It is found in the mitochondrion matrix. Plays an essential role in the assembly of succinate dehydrogenase (SDH), an enzyme complex (also referred to as respiratory complex II) that is a component of both the tricarboxylic acid (TCA) cycle and the mitochondrial electron transport chain, and which couples the oxidation of succinate to fumarate with the reduction of ubiquinone (coenzyme Q) to ubiquinol. Required for flavinylation (covalent attachment of FAD) of the flavoprotein subunit of the SDH catalytic dimer. In Penicillium rubens (strain ATCC 28089 / DSM 1075 / NRRL 1951 / Wisconsin 54-1255) (Penicillium chrysogenum), this protein is Succinate dehydrogenase assembly factor 2, mitochondrial.